Consider the following 279-residue polypeptide: Phenylalanine 3-hydroxylase (279 aa).

Positions 140, 145, and 186 each coordinate Fe cation.

It belongs to the biopterin-dependent aromatic amino acid hydroxylase family. The cofactor is Fe(2+).

It carries out the reaction (6R)-L-erythro-5,6,7,8-tetrahydrobiopterin + L-phenylalanine + O2 = 3-hydroxy-L-phenylalanine + (4aS,6R)-4a-hydroxy-L-erythro-5,6,7,8-tetrahydrobiopterin. In terms of biological role, in vitro, catalyzes the highly regiospecific C-3 hydroxylation of L-phenylalanine (L-Phe) to yield 3-hydroxy-L-phenylalanine (meta-Tyr), an amino acid found in bacterial secondary metabolites such as sanglifehrin A and some pacidamycins. Tetrahydrobiopterin (BH4) seems to be the physiological pterin, however the hydroxylase is also able to use 6-methyltetrahydropterin (6-MePH4). This chain is Phenylalanine 3-hydroxylase, found in Streptomyces coeruleorubidus.